The following is a 276-amino-acid chain: TIMELESS-interacting protein (276 aa).

Positions 1-54 are disordered; it reads MLEQEENGLFEIPDYEHVEDETFPPFPPPGSPERDPAEAEPDEGSGAPVPVPPK. Residues 64-140 form an interaction with TIMELESS region; that stretch reads LDATRLTSER…KEVQTCLKRI (77 aa). The span at 217 to 243 shows a compositional bias: polar residues; that stretch reads SNSQSLENDVTVEESSTGENQEESNGL. The interval 217 to 276 is disordered; that stretch reads SNSQSLENDVTVEESSTGENQEESNGLISADGPHDVPSASTQEEGQLEAEETQLDHPNLD. Residue Ser-219 is modified to Phosphoserine. Position 233 is a phosphothreonine (Thr-233).

Belongs to the CSM3 family. As to quaternary structure, interacts with TIMELESS, which impairs TIMELESS self-association (via N-terminus). Associates with the MCM2-7 complex. Interacts with RPA2, PRDX2.

It is found in the cytoplasm. The protein resides in the nucleus. In terms of biological role, plays an important role in the control of DNA replication and the maintenance of replication fork stability. Important for cell survival after DNA damage or replication stress. May be specifically required for the ATR-CHEK1 pathway in the replication checkpoint induced by hydroxyurea or ultraviolet light. Forms a complex with TIMELESS and this complex regulates DNA replication processes under both normal and stress conditions, stabilizes replication forks and influences both CHEK1 phosphorylation and the intra-S phase checkpoint in response to genotoxic stress. This Rattus norvegicus (Rat) protein is TIMELESS-interacting protein (Tipin).